The following is a 485-amino-acid chain: Sodium-coupled neutral amino acid symporter 1 (485 aa).

The Cytoplasmic portion of the chain corresponds to 1–74; that stretch reads MMHFKSGLEL…EYIPGTTSLG (74 aa). A Phosphoserine modification is found at Ser-6. Thr-11 is modified (phosphothreonine). 4 positions are modified to phosphoserine: Ser-25, Ser-28, Ser-49, and Ser-52. A Phosphothreonine modification is found at Thr-54. The residue at position 56 (Ser-56) is a Phosphoserine. Residues 75–97 traverse the membrane as a helical segment; sequence MSVFNLSNAIMGSGILGLAFALA. The Extracellular portion of the chain corresponds to 98–112; sequence NTGILLFLILLTSVT. The chain crosses the membrane as a helical span at residues 113–133; it reads LLSIYSINLLLICSKETGCMV. Residues 134-148 lie on the Cytoplasmic side of the membrane; sequence YEKLGEQVFGTTGKL. A helical membrane pass occupies residues 149-169; it reads VIFGATSLQNTGAMLSYLFIV. At 170–188 the chain is on the extracellular side; that stretch reads KNELPSAIKSLMGEEETFS. Residues 189-211 traverse the membrane as a helical segment; the sequence is AWYVDGRVLVVMVTFGIILPLCL. The Cytoplasmic segment spans residues 212-216; it reads LKNLG. The chain crosses the membrane as a helical span at residues 217 to 237; that stretch reads YLGYTSGFSLSCMVFFLIVVI. Topologically, residues 238–273 are extracellular; the sequence is YKKFQIPCMNGEQNSTVSANVTDACTPKYVTFNSKT. Cys-245 and Cys-262 are disulfide-bonded. N-linked (GlcNAc...) asparagine glycosylation is found at Asn-251 and Asn-257. Residues 274-294 form a helical membrane-spanning segment; it reads VYALPTIAFAFVCHPSVLPIY. The Cytoplasmic segment spans residues 295–310; it reads SELKDRSQKKMQMVSN. Residues 311-331 form a helical membrane-spanning segment; it reads ISFFAMFVMYFLTAIFGYLTF. Residues 332–348 lie on the Extracellular side of the membrane; that stretch reads YEKVQSDLLHKYQSTGD. The chain crosses the membrane as a helical span at residues 349-369; it reads ILILTVRLAVIVAVILTVPVL. Residues 370 to 391 are Cytoplasmic-facing; it reads FFTVRSSLFELAKKTKFHLCRH. A helical transmembrane segment spans residues 392 to 412; that stretch reads VLVTIILLVIINLLVIFIPSM. Residues 413–414 lie on the Extracellular side of the membrane; sequence KD. Residues 415–435 traverse the membrane as a helical segment; that stretch reads IFGVVGVTSANMLIFILPSSL. Topologically, residues 436 to 450 are cytoplasmic; sequence YLKITNQDGDKNTQR. A helical membrane pass occupies residues 451–471; the sequence is IWAALFLALGVLFSLISIPLV. Topologically, residues 472–485 are extracellular; the sequence is IYDWACSSSNGEGH.

Belongs to the amino acid/polyamine transporter 2 family. N-glycosylation plays an important role in the L-glutamine transport. As to expression, specifically expressed in brain with the highest levels in cerebellum and thalamus (at protein level). Expressed in glutamatergic, GABAergic and a subset of dopaminergic neurons of the substantia nigra and cholinergic motoneurons (at protein level). Also expressed by ependymal cells lining the ventricle (at protein level). Expression is also detected in spinal cord, heart, colon and placenta.

The protein localises to the cell membrane. The enzyme catalyses L-glutamine(in) + Na(+)(in) = L-glutamine(out) + Na(+)(out). It catalyses the reaction L-alanine(in) + Na(+)(in) = L-alanine(out) + Na(+)(out). The catalysed reaction is L-asparagine(in) + Na(+)(in) = L-asparagine(out) + Na(+)(out). It carries out the reaction L-histidine(in) + Na(+)(in) = L-histidine(out) + Na(+)(out). The enzyme catalyses L-serine(in) + Na(+)(in) = L-serine(out) + Na(+)(out). It catalyses the reaction L-cysteine(in) + Na(+)(in) = L-cysteine(out) + Na(+)(out). The catalysed reaction is L-methionine(in) + Na(+)(in) = L-methionine(out) + Na(+)(out). It carries out the reaction glycine(in) + Na(+)(in) = glycine(out) + Na(+)(out). The enzyme catalyses L-threonine(in) + Na(+)(in) = L-threonine(out) + Na(+)(out). It catalyses the reaction L-proline(in) + Na(+)(in) = L-proline(out) + Na(+)(out). Its activity is regulated as follows. Inhibited by alpha-(methylamino)isobutyric acid (MeAIB). Inhibited by lithium, potassium, choline ions, N-methylglucamine. The pH dependence has an allosteric effect on the transport. In terms of biological role, symporter that cotransports short-chain neutral amino acids and sodium ions from the extraccellular to the intracellular side of the cell membrane. The transport is elctrogenic, pH dependent and driven by the Na(+) electrochemical gradient. Participates in the astroglia-derived glutamine transport into GABAergic interneurons for neurotransmitter GABA de novo synthesis. May also contributes to amino acid transport in placental trophoblast. Regulates synaptic plasticity. This chain is Sodium-coupled neutral amino acid symporter 1, found in Rattus norvegicus (Rat).